Here is a 560-residue protein sequence, read N- to C-terminus: Beta-hexosaminidase subunit B1 (560 aa).

The first 25 residues, 1–25 (MIILKRNIVFLLIIIIVLGIFIATS), serve as a signal peptide directing secretion. N59, N69, N81, N99, N161, N293, and N346 each carry an N-linked (GlcNAc...) asparagine glycan. The active-site Proton donor is E359. N366, N436, N472, and N547 each carry an N-linked (GlcNAc...) asparagine glycan.

The protein belongs to the glycosyl hydrolase 20 family.

It localises to the lysosome. The catalysed reaction is Hydrolysis of terminal non-reducing N-acetyl-D-hexosamine residues in N-acetyl-beta-D-hexosaminides.. Functionally, responsible for the degradation of GM2 gangliosides, and a variety of other molecules containing terminal N-acetyl hexosamines. In Dictyostelium discoideum (Social amoeba), this protein is Beta-hexosaminidase subunit B1 (hexb1).